A 421-amino-acid chain; its full sequence is UPF0229 protein lpl2726 (421 aa).

Residues 83 to 110 (IAGDRIKRPGGGGSGGAGGNASDSGEGE) form a disordered region. Positions 91 to 101 (PGGGGSGGAGG) are enriched in gly residues.

It belongs to the UPF0229 family.

This Legionella pneumophila (strain Lens) protein is UPF0229 protein lpl2726.